A 357-amino-acid polypeptide reads, in one-letter code: MGRRIAVVLFNLGGPDTGNDVQPFLKNLFRDPAIIRAPLPVRWLVARLISTLRAPVVKQNYAMMDAGGGSPLLRETKKQADALQAELAKKLPGDEVRCFIAMRYWHPFTEEAAAEVQKWGADEVVLLPLYPQFSTTTTGSSLSAWHKAYKGKSRTICCYPFEENFVSAHVDQIMAAWERAGRPGNVNLLLSAHGLPESVVKSGDPYQWQCEALAEMIAGRVPADWEVSVCYQSRVGPMKWIGPPTEEEIARISDQGRNILIAPIAFVSEHIETLVELGEEYRLVAEKHGAASYTRVEALGVHPGFISTLTGEVLAALGMKETIRSCAGGRLCPSGWSGCPQAELKQKAGVRITETAG.

2 residues coordinate Fe cation: H193 and E272.

It belongs to the ferrochelatase family.

The protein localises to the cytoplasm. It carries out the reaction heme b + 2 H(+) = protoporphyrin IX + Fe(2+). The protein operates within porphyrin-containing compound metabolism; protoheme biosynthesis; protoheme from protoporphyrin-IX: step 1/1. In terms of biological role, catalyzes the ferrous insertion into protoporphyrin IX. This Hyphomonas neptunium (strain ATCC 15444) protein is Ferrochelatase.